The primary structure comprises 361 residues: Phospho-N-acetylmuramoyl-pentapeptide-transferase (361 aa).

10 helical membrane passes run 25-45 (TGGAMVTGALFVFMFGPWIID), 72-92 (TPTMGGLMILSGLTVGTVLWA), 95-115 (LNPYVWIVLAVTLGFGFVGFY), 135-155 (LLIEFIIAGAACFALVWLGRA), 169-189 (VMLNLGWAFVVFGAFVVVGAG), 200-220 (GLAIVPVMIAAASFGLISYLA), 240-260 (LAVLCGALLGAGLGFLWFNAP), 264-284 (IFMGDTGSLALGGMLGSIAVA), 289-309 (IVLAVIGGLFVLEAVSVIVQV), and 338-358 (QIVIRFWIIAVMLALAGLSTL).

Belongs to the glycosyltransferase 4 family. MraY subfamily. Mg(2+) serves as cofactor.

It localises to the cell inner membrane. It carries out the reaction UDP-N-acetyl-alpha-D-muramoyl-L-alanyl-gamma-D-glutamyl-meso-2,6-diaminopimeloyl-D-alanyl-D-alanine + di-trans,octa-cis-undecaprenyl phosphate = di-trans,octa-cis-undecaprenyl diphospho-N-acetyl-alpha-D-muramoyl-L-alanyl-D-glutamyl-meso-2,6-diaminopimeloyl-D-alanyl-D-alanine + UMP. The protein operates within cell wall biogenesis; peptidoglycan biosynthesis. Its function is as follows. Catalyzes the initial step of the lipid cycle reactions in the biosynthesis of the cell wall peptidoglycan: transfers peptidoglycan precursor phospho-MurNAc-pentapeptide from UDP-MurNAc-pentapeptide onto the lipid carrier undecaprenyl phosphate, yielding undecaprenyl-pyrophosphoryl-MurNAc-pentapeptide, known as lipid I. The chain is Phospho-N-acetylmuramoyl-pentapeptide-transferase from Rhodopseudomonas palustris (strain TIE-1).